Reading from the N-terminus, the 181-residue chain is Inner membrane-spanning protein YciB (181 aa).

5 consecutive transmembrane segments (helical) span residues Ile-22–Ala-42, Met-50–Asp-70, Ile-80–Ile-100, Trp-122–Leu-142, and Phe-148–Val-168.

This sequence belongs to the YciB family.

It is found in the cell inner membrane. Functionally, plays a role in cell envelope biogenesis, maintenance of cell envelope integrity and membrane homeostasis. The sequence is that of Inner membrane-spanning protein YciB from Aliivibrio fischeri (strain MJ11) (Vibrio fischeri).